Consider the following 142-residue polypeptide: Large ribosomal subunit protein uL13 (142 aa).

This sequence belongs to the universal ribosomal protein uL13 family. As to quaternary structure, part of the 50S ribosomal subunit.

In terms of biological role, this protein is one of the early assembly proteins of the 50S ribosomal subunit, although it is not seen to bind rRNA by itself. It is important during the early stages of 50S assembly. This chain is Large ribosomal subunit protein uL13, found in Coxiella burnetii (strain CbuG_Q212) (Coxiella burnetii (strain Q212)).